Here is a 104-residue protein sequence, read N- to C-terminus: MYAIVKTGGKQYKVAEGDVIEVEKLAGTPGDAVQLAAVLLVDGDDLVTDAAKLAKVEVSGEIAAHTKGPKIRIHKFKNKTGYHKRQGHRQPLTQVKVTGISSGK.

This sequence belongs to the bacterial ribosomal protein bL21 family. In terms of assembly, part of the 50S ribosomal subunit. Contacts protein L20.

This protein binds to 23S rRNA in the presence of protein L20. The sequence is that of Large ribosomal subunit protein bL21 from Salinispora tropica (strain ATCC BAA-916 / DSM 44818 / JCM 13857 / NBRC 105044 / CNB-440).